The chain runs to 434 residues: Serine hydroxymethyltransferase (434 aa).

Residues Leu132 and Gly136–Leu138 each bind (6S)-5,6,7,8-tetrahydrofolate. Lys241 carries the post-translational modification N6-(pyridoxal phosphate)lysine.

The protein belongs to the SHMT family. In terms of assembly, homodimer. Requires pyridoxal 5'-phosphate as cofactor.

Its subcellular location is the cytoplasm. The enzyme catalyses (6R)-5,10-methylene-5,6,7,8-tetrahydrofolate + glycine + H2O = (6S)-5,6,7,8-tetrahydrofolate + L-serine. The protein operates within one-carbon metabolism; tetrahydrofolate interconversion. It functions in the pathway amino-acid biosynthesis; glycine biosynthesis; glycine from L-serine: step 1/1. Functionally, catalyzes the reversible interconversion of serine and glycine with tetrahydrofolate (THF) serving as the one-carbon carrier. This reaction serves as the major source of one-carbon groups required for the biosynthesis of purines, thymidylate, methionine, and other important biomolecules. Also exhibits THF-independent aldolase activity toward beta-hydroxyamino acids, producing glycine and aldehydes, via a retro-aldol mechanism. The sequence is that of Serine hydroxymethyltransferase from Nitrobacter hamburgensis (strain DSM 10229 / NCIMB 13809 / X14).